The sequence spans 331 residues: Phenol 2-monooxygenase, oxygenase component DmpL (331 aa).

It belongs to the TmoE/XamoE family. As to quaternary structure, the multicomponent enzyme phenol hydroxylase is formed by DmpL (P1 component), DmpM (P2 component), DmpN (P3 component), DmpO (P4 component) and DmpP (P5 component). The oxygenase component is a dimer composed of three subunits, DmpL, DmpN and DmpO (DmpLNO). DmpL interacts with the auxiliary protein DmpK (P0 component).

The enzyme catalyses phenol + NADH + O2 + H(+) = catechol + NAD(+) + H2O. The protein operates within aromatic compound metabolism; phenol degradation. With respect to regulation, requires DmpM for efficient turnover. The activity of DmpLNO oxygenase is inhibited by dithiothreitol (DTT) by a mechanism apparently involving H(2)O(2) generation. Its function is as follows. Part of a multicomponent enzyme which catalyzes the degradation of phenol and some of its methylated derivatives. DmpL, DmpN and DmpO form the oxygenase component of the complex. Required for growth on phenol and for in vitro phenol hydroxylase activity. The chain is Phenol 2-monooxygenase, oxygenase component DmpL from Pseudomonas sp. (strain CF600).